Reading from the N-terminus, the 228-residue chain is Small ribosomal subunit protein uS3 (228 aa).

The KH type-2 domain maps to T39–R107.

The protein belongs to the universal ribosomal protein uS3 family. In terms of assembly, part of the 30S ribosomal subunit. Forms a tight complex with proteins S10 and S14.

Functionally, binds the lower part of the 30S subunit head. Binds mRNA in the 70S ribosome, positioning it for translation. The sequence is that of Small ribosomal subunit protein uS3 from Pseudomonas putida (strain ATCC 700007 / DSM 6899 / JCM 31910 / BCRC 17059 / LMG 24140 / F1).